The primary structure comprises 2164 residues: Genome polyprotein (2164 aa).

The N-myristoyl glycine; by host moiety is linked to residue Gly2. At 2–1477 the chain is on the cytoplasmic side; the sequence is GAQVSRQNVG…DLGIANMTIG (1476 aa). The tract at residues 208–239 is disordered; the sequence is NVSVGYNHTHPGEQGREVVPSRTSSDNKRPSD. The segment at 572–588 is amphipathic alpha-helix; sequence LTQNPVENYIDSVLNEV. Active-site for protease 2A activity residues include His884 and Asp901. Zn(2+) is bound by residues Cys918 and Cys920. Catalysis depends on Cys972, which acts as the For protease 2A activity. Residues Cys978 and His980 each coordinate Zn(2+). The segment at 1104–1173 is membrane-binding; it reads SDSWLKKFTE…TIRLAPASVQ (70 aa). Residues 1104 to 1237 are oligomerization; it reads SDSWLKKFTE…SPGTGKSLAT (134 aa). The tract at residues 1125–1129 is RNA-binding; it reads GQKIS. In terms of domain architecture, SF3 helicase spans 1197 to 1357; sequence EARRIKNLYI…KEYLLDGKLD (161 aa). 1227 to 1234 is a binding site for ATP; it reads GSPGTGKS. The Zn(2+) site is built by Cys1365, Cys1376, and Cys1381. The segment at 1365-1381 adopts a C4-type; degenerate zinc-finger fold; sequence CDVNIKIGNAKCCPFIC. Positions 1408–1415 are RNA-binding; the sequence is EDRRRSSA. An oligomerization region spans residues 1419–1424; the sequence is MEAIFQ. The stretch at 1478-1493 is an intramembrane region; that stretch reads IIANVVSIVGVIYIIY. At 1494-2164 the chain is on the cytoplasmic side; it reads KLFCTLQGPY…VLEHEWYEKF (671 aa). Residue Tyr1503 is modified to O-(5'-phospho-RNA)-tyrosine. Positions 1522-1700 constitute a Peptidase C3 domain; sequence GPEEEFGRSL…FSAMLLKSYF (179 aa). Active-site for protease 3C activity residues include His1561, Glu1592, and Cys1668. Positions 1932-2045 constitute a RdRp catalytic domain; sequence ECLMAFDYSN…SYNFKLDMAV (114 aa). Mg(2+)-binding residues include Asp1938 and Asp2031.

This sequence belongs to the picornaviruses polyprotein family. Interacts with capsid protein VP1 and capsid protein VP3 to form heterotrimeric protomers. As to quaternary structure, interacts with capsid protein VP0, and capsid protein VP3 to form heterotrimeric protomers. Five protomers subsequently associate to form pentamers which serve as building blocks for the capsid. Interacts with capsid protein VP2, capsid protein VP3 and capsid protein VP4 following cleavage of capsid protein VP0. In terms of assembly, interacts with capsid protein VP1 and capsid protein VP3 in the mature capsid. Interacts with capsid protein VP0 and capsid protein VP1 to form heterotrimeric protomers. Five protomers subsequently associate to form pentamers which serve as building blocks for the capsid. Interacts with capsid protein VP4 in the mature capsid. Interacts with protein 2C; this interaction may be important for virion morphogenesis. As to quaternary structure, interacts with capsid protein VP1 and capsid protein VP3. In terms of assembly, homodimer. Homohexamer; forms a hexameric ring structure with 6-fold symmetry characteristic of AAA+ ATPases. Interacts (via N-terminus) with host RTN3 (via reticulon domain); this interaction is important for viral replication. Interacts with capsid protein VP3; this interaction may be important for virion morphogenesis. As to quaternary structure, interacts with protein 3CD. In terms of assembly, homodimer. Interacts with host GBF1. Interacts (via GOLD domain) with host ACBD3 (via GOLD domain); this interaction allows the formation of a viral protein 3A/ACBD3 heterotetramer with a 2:2 stoichiometry, which will stimulate the recruitment of host PI4KB in order to synthesize PI4P at the viral RNA replication sites. Interacts with RNA-directed RNA polymerase. As to quaternary structure, interacts with protein 3AB and with RNA-directed RNA polymerase. In terms of assembly, interacts with Viral protein genome-linked and with protein 3CD. The cofactor is Mg(2+). In terms of processing, specific enzymatic cleavages in vivo by the viral proteases yield processing intermediates and the mature proteins. Post-translationally, myristoylation is required for the formation of pentamers during virus assembly. Further assembly of 12 pentamers and a molecule of genomic RNA generates the provirion. During virion maturation, immature virions are rendered infectious following cleavage of VP0 into VP4 and VP2. This maturation seems to be an autocatalytic event triggered by the presence of RNA in the capsid and it is followed by a conformational change infectious virion. In terms of processing, myristoylation is required during RNA encapsidation and formation of the mature virus particle. Post-translationally, VPg is uridylylated by the polymerase into VPg-pUpU. This acts as a nucleotide-peptide primer for the genomic RNA replication.

It is found in the virion. It localises to the host cytoplasm. The protein resides in the host cytoplasmic vesicle membrane. The protein localises to the host nucleus. The catalysed reaction is a ribonucleoside 5'-triphosphate + H2O = a ribonucleoside 5'-diphosphate + phosphate + H(+). The enzyme catalyses Selective cleavage of Tyr-|-Gly bond in the picornavirus polyprotein.. It catalyses the reaction RNA(n) + a ribonucleoside 5'-triphosphate = RNA(n+1) + diphosphate. It carries out the reaction Selective cleavage of Gln-|-Gly bond in the poliovirus polyprotein. In other picornavirus reactions Glu may be substituted for Gln, and Ser or Thr for Gly.. With respect to regulation, replication or transcription is subject to high level of random mutations by the nucleotide analog ribavirin. In terms of biological role, forms an icosahedral capsid of pseudo T=3 symmetry with capsid proteins VP2 and VP3. The capsid is 300 Angstroms in diameter, composed of 60 copies of each capsid protein and enclosing the viral positive strand RNA genome. Capsid protein VP1 mainly forms the vertices of the capsid. Capsid protein VP1 interacts with host cell receptor to provide virion attachment to target host cells. This attachment induces virion internalization. Tyrosine kinases are probably involved in the entry process. After binding to its receptor, the capsid undergoes conformational changes. Capsid protein VP1 N-terminus (that contains an amphipathic alpha-helix) and capsid protein VP4 are externalized. Together, they shape a pore in the host membrane through which viral genome is translocated to host cell cytoplasm. Forms an icosahedral capsid of pseudo T=3 symmetry with capsid proteins VP2 and VP3. The capsid is 300 Angstroms in diameter, composed of 60 copies of each capsid protein and enclosing the viral positive strand RNA genome. Functionally, lies on the inner surface of the capsid shell. After binding to the host receptor, the capsid undergoes conformational changes. Capsid protein VP4 is released, Capsid protein VP1 N-terminus is externalized, and together, they shape a pore in the host membrane through which the viral genome is translocated into the host cell cytoplasm. Its function is as follows. Component of immature procapsids, which is cleaved into capsid proteins VP4 and VP2 after maturation. Allows the capsid to remain inactive before the maturation step. In terms of biological role, cysteine protease that cleaves viral polyprotein and specific host proteins. It is responsible for the autocatalytic cleavage between the P1 and P2 regions, which is the first cleavage occurring in the polyprotein. Also cleaves the host translation initiation factor EIF4G1, in order to shut down the capped cellular mRNA translation. Inhibits the host nucleus-cytoplasm protein and RNA trafficking by cleaving host members of the nuclear pores. Counteracts stress granule formation probably by antagonizing its assembly or promoting its dissassembly. Plays an essential role in the virus replication cycle by acting as a viroporin. Creates a pore in the host endoplasmic reticulum and as a consequence releases Ca2+ in the cytoplasm of infected cell. In turn, high levels of cytoplasmic calcium may trigger membrane trafficking and transport of viral ER-associated proteins to viroplasms, sites of viral genome replication. Functionally, induces and associates with structural rearrangements of intracellular membranes. Displays RNA-binding, nucleotide binding and NTPase activities. May play a role in virion morphogenesis and viral RNA encapsidation by interacting with the capsid protein VP3. Its function is as follows. Localizes the viral replication complex to the surface of membranous vesicles. Together with protein 3CD binds the Cis-Active RNA Element (CRE) which is involved in RNA synthesis initiation. Acts as a cofactor to stimulate the activity of 3D polymerase, maybe through a nucleid acid chaperone activity. In terms of biological role, localizes the viral replication complex to the surface of membranous vesicles. It inhibits host cell endoplasmic reticulum-to-Golgi apparatus transport and causes the disassembly of the Golgi complex, possibly through GBF1 interaction. This would result in depletion of MHC, trail receptors and IFN receptors at the host cell surface. Plays an essential role in viral RNA replication by recruiting ACBD3 and PI4KB at the viral replication sites, thereby allowing the formation of the rearranged membranous structures where viral replication takes place. Acts as a primer for viral RNA replication and remains covalently bound to viral genomic RNA. VPg is uridylylated prior to priming replication into VPg-pUpU. The oriI viral genomic sequence may act as a template for this. The VPg-pUpU is then used as primer on the genomic RNA poly(A) by the RNA-dependent RNA polymerase to replicate the viral genome. During genome replication, the VPg-RNA linkage is removed by the host TDP2, thereby accelerating replication. During the late stage of the replication cycle, host TDP2 is excluded from sites of viral RNA synthesis and encapsidation, allowing for the generation of progeny virions. Functionally, involved in the viral replication complex and viral polypeptide maturation. It exhibits protease activity with a specificity and catalytic efficiency that is different from protease 3C. Protein 3CD lacks polymerase activity. Protein 3CD binds to the 5'UTR of the viral genome. Its function is as follows. Replicates the viral genomic RNA on the surface of intracellular membranes. May form linear arrays of subunits that propagate along a strong head-to-tail interaction called interface-I. Covalently attaches UMP to a tyrosine of VPg, which is used to prime RNA synthesis. The positive stranded RNA genome is first replicated at virus induced membranous vesicles, creating a dsRNA genomic replication form. This dsRNA is then used as template to synthesize positive stranded RNA genomes. ss(+)RNA genomes are either translated, replicated or encapsidated. In terms of biological role, major viral protease that mediates proteolytic processing of the polyprotein. Cleaves host EIF5B, contributing to host translation shutoff. Also cleaves host PABPC1, contributing to host translation shutoff. Cleaves host NLRP1, triggers host N-glycine-mediated degradation of the autoinhibitory NLRP1 N-terminal fragment. This chain is Genome polyprotein, found in Human rhinovirus A serotype 89 (strain 41467-Gallo) (HRV-89).